The chain runs to 450 residues: Exodeoxyribonuclease 7 large subunit (450 aa).

This sequence belongs to the XseA family. Heterooligomer composed of large and small subunits.

It localises to the cytoplasm. The catalysed reaction is Exonucleolytic cleavage in either 5'- to 3'- or 3'- to 5'-direction to yield nucleoside 5'-phosphates.. Its function is as follows. Bidirectionally degrades single-stranded DNA into large acid-insoluble oligonucleotides, which are then degraded further into small acid-soluble oligonucleotides. The chain is Exodeoxyribonuclease 7 large subunit from Listeria monocytogenes serotype 4b (strain CLIP80459).